The primary structure comprises 592 residues: Colicin-A (592 aa).

Composition is skewed to gly residues over residues 1–13 (MPGF…GDGT) and 23–34 (PEPGGGSHGNSG). Disordered stretches follow at residues 1-57 (MPGF…PGDS) and 373-395 (RQRQ…KAKD). 2 helical membrane passes run 528-548 (WVLS…TLGA) and 555-575 (VPAI…GALI).

It belongs to the channel forming colicin family.

The protein localises to the cell membrane. Functionally, this colicin is a channel-forming colicin. This class of transmembrane toxins depolarize the cytoplasmic membrane, leading to dissipation of cellular energy. In terms of biological role, colicins are polypeptide toxins produced by and active against E.coli and closely related bacteria. The sequence is that of Colicin-A (caa) from Citrobacter freundii.